A 216-amino-acid polypeptide reads, in one-letter code: Adenylate kinase (216 aa).

10–15 (GAGKGT) provides a ligand contact to ATP. The tract at residues 30 to 59 (STGDILRENVKKGTALGLKAKSYMDKGELV) is NMP. Residues Thr31, Arg36, 57–59 (ELV), 85–88 (GFPR), and Gln92 each bind AMP. The LID stretch occupies residues 126 to 163 (GRRICRSCGASYHLVFNPPKAKDLCDSCGGELYQRDDD). Arg127 serves as a coordination point for ATP. The Zn(2+) site is built by Cys130 and Cys133. 136-137 (SY) contributes to the ATP binding site. Zn(2+) is bound by residues Cys150 and Cys153. 2 residues coordinate AMP: Arg160 and Arg171. Position 199 (Lys199) interacts with ATP.

The protein belongs to the adenylate kinase family. As to quaternary structure, monomer.

The protein localises to the cytoplasm. It carries out the reaction AMP + ATP = 2 ADP. It functions in the pathway purine metabolism; AMP biosynthesis via salvage pathway; AMP from ADP: step 1/1. Catalyzes the reversible transfer of the terminal phosphate group between ATP and AMP. Plays an important role in cellular energy homeostasis and in adenine nucleotide metabolism. In Methanocella arvoryzae (strain DSM 22066 / NBRC 105507 / MRE50), this protein is Adenylate kinase.